Here is a 795-residue protein sequence, read N- to C-terminus: Protocadherin beta-4 (795 aa).

The first 27 residues, 1-27, serve as a signal peptide directing secretion; sequence MKKLGRIHPNRQVLAFILMVFLSQVRL. Residues 28–689 are Extracellular-facing; sequence EPIRYSVLEE…AQADSLTVYL (662 aa). 5 Cadherin domains span residues 34-132, 137-241, 246-346, 351-450, and 455-560; these read VLEE…SPIF, VLLK…APEF, YGVQ…PPEL, LTSS…APAF, and YTLF…SPFV. An N-linked (GlcNAc...) asparagine glycan is attached at asparagine 183. 2 N-linked (GlcNAc...) asparagine glycosylation sites follow: asparagine 417 and asparagine 435. An N-linked (GlcNAc...) asparagine glycan is attached at asparagine 566. One can recognise a Cadherin 6 domain in the interval 567 to 670; sequence GSAPCTELVP…LVDGFSQPYL (104 aa). The chain crosses the membrane as a helical span at residues 690–710; the sequence is VVALASVSSLFLFSVLLFVAV. The Cytoplasmic segment spans residues 711–795; the sequence is RLCRRSRAAS…PKFRNSLVFS (85 aa).

It localises to the cell membrane. Its function is as follows. Potential calcium-dependent cell-adhesion protein. May be involved in the establishment and maintenance of specific neuronal connections in the brain. The polypeptide is Protocadherin beta-4 (PCDHB4) (Homo sapiens (Human)).